The chain runs to 490 residues: Monocarboxylate transporter 3 (490 aa).

Residues 1–14 (MGAGGPRRGAGPPD) lie on the Cytoplasmic side of the membrane. Residues 15–35 (GGWGWVVLGACFVITGFAYGF) form a helical membrane-spanning segment. Residues 36–58 (PKAVSVFFRELKRDFGAGYSDTA) lie on the Extracellular side of the membrane. The helical transmembrane segment at 59-79 (WVSSIMLAMLYGTGPLSSILV) threads the bilayer. The Cytoplasmic segment spans residues 80–85 (TRFGCR). The chain crosses the membrane as a helical span at residues 86–106 (PVMLAGGLLASAGMILASFAS). The Extracellular portion of the chain corresponds to 107–115 (RLLELYLTA). Residues 116-136 (GVLTGLGLALNFQPSLIMLGL) form a helical membrane-spanning segment. Over 137–147 (YFERRRPLANG) the chain is Cytoplasmic. Residues 148 to 168 (LAAAGSPVFLSTLSPLGQLLG) traverse the membrane as a helical segment. Residues 169–172 (ERFG) lie on the Extracellular side of the membrane. A helical membrane pass occupies residues 173 to 193 (WRGGFLLFGGLLLHCCACGAV). The Cytoplasmic portion of the chain corresponds to 194–230 (MRPPPGPQPRPDPAPPGGRARHRQLLDLAVCTDRTFM). Residues 231–251 (VYMVTKFLMALGLFVPAILLV) traverse the membrane as a helical segment. Topologically, residues 252–257 (NYAKDA) are extracellular. The helical transmembrane segment at 258-278 (GVPDAEAAFLLSIVGFVDIVA) threads the bilayer. The Cytoplasmic segment spans residues 279 to 293 (RPACGALAGLGRLRP). A helical membrane pass occupies residues 294 to 314 (HVPYLFSLALLANGLTDLISA). The Extracellular portion of the chain corresponds to 315-318 (RARS). The chain crosses the membrane as a helical span at residues 319–339 (YGTLVAFCIAFGLSYGMVGAL). At 340 to 352 (QFEVLMATVGAPR) the chain is on the cytoplasmic side. A helical transmembrane segment spans residues 353-373 (FPSALGLVLLVEAVAVLIGPP). At 374–386 (SAGRLVDALKNYE) the chain is on the extracellular side. The chain crosses the membrane as a helical span at residues 387–407 (IIFYLAGSEVVLAGVFMAVTT). At 408-490 (YCCQRCSKDI…GGHEAHGQNA (83 aa)) the chain is on the cytoplasmic side. Residues 419–490 (PGPSAEGGTS…GGHEAHGQNA (72 aa)) form a disordered region. Basolateral sorting signal stretches follow at residues 426–460 (GTSD…VLSP) and 461–480 (RAGS…HESV). Basic and acidic residues predominate over residues 475-490 (LSHESVGGHEAHGQNA).

Belongs to the major facilitator superfamily. Monocarboxylate porter (TC 2.A.1.13) family. In terms of tissue distribution, retinal pigment epithelium.

It localises to the basolateral cell membrane. It carries out the reaction (S)-lactate(in) + H(+)(in) = (S)-lactate(out) + H(+)(out). Its function is as follows. Probable retinal pigment epithelium (RPE)-specific proton-coupled L-lactate transporter. May facilitate transport of lactate and H(+) out of the retina and could therefore play a role in pH and ion homeostasis of the outer retina. This chain is Monocarboxylate transporter 3 (Slc16a8), found in Rattus norvegicus (Rat).